We begin with the raw amino-acid sequence, 474 residues long: Salutaridinol 7-O-acetyltransferase (474 aa).

The Proton acceptor role is filled by His-163. A disordered region spans residues 213–234 (ERLTSPSGMSEIPFSSTPEDTE). Over residues 214–230 (RLTSPSGMSEIPFSSTP) the composition is skewed to polar residues. The active-site Proton acceptor is the Asp-416.

It belongs to the plant acyltransferase family. In terms of tissue distribution, expressed in root, stem, leaf and capsule of the mature plant. Restricted to sieve elements of the phloem adjacent or proximal to laticifers.

It catalyses the reaction (7S)-salutaridinol + acetyl-CoA = (7S)-O-acetylsalutaridinol + CoA. It participates in alkaloid biosynthesis; morphine biosynthesis. Functionally, acetyltransferase involved in biosynthesis of morphinan-type benzylisoquinoline and opiate alkaloids natural products. Catalyzes the conversion of the phenanthrene alkaloid salutaridinol to salutaridinol-7-O-acetate, the immediate precursor of thebaine along the morphine biosynthetic pathway. Conversion of 7-O-acetylsalutaridinol into thebaine is spontaneous. This chain is Salutaridinol 7-O-acetyltransferase, found in Papaver somniferum (Opium poppy).